The chain runs to 47 residues: uncharacterized protein (47 aa).

One can recognise an ATP-cone domain in the interval Leu-2–Gly-47.

This is an uncharacterized protein from Archaeoglobus fulgidus (strain ATCC 49558 / DSM 4304 / JCM 9628 / NBRC 100126 / VC-16).